We begin with the raw amino-acid sequence, 970 residues long: MLQQVNGHNPGSDGQAREYLREDLQEFLGGEVLLYKLDDLTRVNPVTLETVLRCLQARYMADTFYTNAGCTLVALNPFKPVPQLYSPELMREYHAAPQPQKLKPHVFTVGEQTYRNVKSLIEPVNQSIVVSGESGAGKTWTSRCLMKFYAVVATSPASWESHKIAERIEQRILNSNPVMEAFGNACTLRNNNSSRFGKFIQLQLNRAQQMTGAAVQTYLLEKTRVACQASSERNFHIFYQICKGASEDERLQWHLPEGAAFSWLPNPERSLEEDCFEVTREAMLHLGIDTPTQNNIFKVLAGLLHLGNIQFAASEDEAQPCQPMDDAKYSVRTAASLLGLPEDVLLEMVQIRTIRAGRQQQVFRKPCARAECDTRRDCLAKLIYARLFDWLVSVINSSICADTDSWTTFIGLLDVYGFESFPDNSLEQLCINYANEKLQQHFVAHYLRAQQEEYAVEGLEWSFINYQDNQPCLDLIEGSPISICSLINEECRLNRPSSAAQLQTRIETALAGSPCLGHNKLSREPSFIVVHYAGPVRYHTAGLVEKNKDPIPPELTRLLQQSQDPLLMGLFPTNPKEKTQEEPPGQSRAPVLTVVSKFKASLEQLLQVLHSTTPHYIRCIKPNSQGQAQTFLQEEVLSQLEACGLVETIHISAAGFPIRVSHRNFVERYKLLRRLHPCTSSGPDSPYPAKGLPEWCPHSEEATLEPLIQDILHTLPVLTQAAAITGDSAEAMPAPMHCGRTKVFMTDSMLELLECGRARVLEQCARCIQGGWRRHRHREQERQWRAVMLIQAAIRSWLTRKHIQRLHAAATVIKRAWQKWRIRMACLAAKELDGVEEKHFSQAPCSLSTSPLQTRLLEAIIRLWPLGLVLANTAMGVGSFQRKLVVWACLQLPRGSPSSYTVQTAQDQAGVTSIRALPQGSIKFHCRKSPLRYADICPEPSPYSITGFNQILLERHRLIHVTSSAFTGLG.

Positions 35-758 (YKLDDLTRVN…MLELLECGRA (724 aa)) constitute a Myosin motor domain. 132–139 (GESGAGKT) contributes to the ATP binding site. Residues 602–624 (LEQLLQVLHSTTPHYIRCIKPNS) form an actin-binding region. Phosphoserine is present on Ser-685. 2 consecutive IQ domains span residues 759–779 (RVLE…RHRE) and 783–812 (QWRA…AATV). Residues 824 to 970 (MACLAAKELD…VTSSAFTGLG (147 aa)) are myMOMA region.

The protein belongs to the TRAFAC class myosin-kinesin ATPase superfamily. Myosin family. In terms of assembly, myosin is a hexamer of 2 heavy chains and 4 light chains: interacts with myosin light chains MYL9 and MYL12B. As to expression, widely expressed in multiple tissues and cell lines.

It is found in the mitochondrion outer membrane. The protein resides in the cytoplasm. The protein localises to the cytoskeleton. Actin-based motor molecule with ATPase activity that localizes to the mitochondrion outer membrane. Motor protein that moves towards the plus-end of actin filaments. Required for mitochondrial inheritance during mitosis. May be involved in mitochondrial transport or positioning. This Homo sapiens (Human) protein is Unconventional myosin-XIX.